We begin with the raw amino-acid sequence, 332 residues long: Large ribosomal subunit protein mL44 (332 aa).

The transit peptide at 1 to 30 (MASGLTRLLLRGPRCLLATAGLTLIPPVRG) directs the protein to the mitochondrion. Residues 86–228 (DLLKTAFVNS…LITQMTGKEL (143 aa)) form the RNase III domain. One can recognise a DRBM domain in the interval 236–306 (NPMGLLVQEL…ARVALRKLYG (71 aa)).

The protein belongs to the ribonuclease III family. Mitochondrion-specific ribosomal protein mL44 subfamily. Component of the mitochondrial ribosome large subunit (39S) which comprises a 16S rRNA and about 50 distinct proteins.

It is found in the mitochondrion. Component of the 39S subunit of mitochondrial ribosome. May have a function in the assembly/stability of nascent mitochondrial polypeptides exiting the ribosome. This Bos taurus (Bovine) protein is Large ribosomal subunit protein mL44 (MRPL44).